A 123-amino-acid chain; its full sequence is Small ribosomal subunit protein uS12 (123 aa).

The tract at residues 1–24 (MPTINQLIRKERKKQVKKSKSPAL) is disordered. A compositionally biased stretch (basic residues) spans 10 to 20 (KERKKQVKKSK). Aspartate 89 carries the 3-methylthioaspartic acid modification.

Belongs to the universal ribosomal protein uS12 family. As to quaternary structure, part of the 30S ribosomal subunit. Contacts proteins S8 and S17. May interact with IF1 in the 30S initiation complex.

Functionally, with S4 and S5 plays an important role in translational accuracy. In terms of biological role, interacts with and stabilizes bases of the 16S rRNA that are involved in tRNA selection in the A site and with the mRNA backbone. Located at the interface of the 30S and 50S subunits, it traverses the body of the 30S subunit contacting proteins on the other side and probably holding the rRNA structure together. The combined cluster of proteins S8, S12 and S17 appears to hold together the shoulder and platform of the 30S subunit. This is Small ribosomal subunit protein uS12 from Sulfurovum sp. (strain NBC37-1).